Here is a 292-residue protein sequence, read N- to C-terminus: MKDYLVKQVSEDGQLRAYAVNATQVVTEAQEKHDTWPTSSAAFGRTIVGTLLLSAAGLKGDTKMTVKVDGDGPVGKIVVDGNAQGTVKGYVTNPHVNLPSNEKNKIDVKAGVGTTGTLSVTKDLGLKEPFTGQVPLVSGELGEDFTYYLAKSEQTPSAVGVSVFVNEDSTIGVAGGFMIQILPGADDRLIDVLEARLQEMPLVSELLQQGMTPEGIITEIVGELPMKTLEELPVKYECDCSKERFAKALSSIAPQDLKQLIEEDHGAEATCRFCGKQYQFSEADLKAILAEQ.

Disulfide bonds link Cys238–Cys240 and Cys271–Cys274.

This sequence belongs to the HSP33 family. In terms of processing, under oxidizing conditions two disulfide bonds are formed involving the reactive cysteines. Under reducing conditions zinc is bound to the reactive cysteines and the protein is inactive.

The protein resides in the cytoplasm. In terms of biological role, redox regulated molecular chaperone. Protects both thermally unfolding and oxidatively damaged proteins from irreversible aggregation. Plays an important role in the bacterial defense system toward oxidative stress. The chain is 33 kDa chaperonin from Latilactobacillus sakei subsp. sakei (strain 23K) (Lactobacillus sakei subsp. sakei).